We begin with the raw amino-acid sequence, 160 residues long: Cytochrome b6-f complex subunit 4 (160 aa).

Helical transmembrane passes span 36–56 (LLYI…GLAV), 95–115 (LLGI…PFIE), and 128–148 (IAMA…IGAC).

Belongs to the cytochrome b family. PetD subfamily. The 4 large subunits of the cytochrome b6-f complex are cytochrome b6, subunit IV (17 kDa polypeptide, PetD), cytochrome f and the Rieske protein, while the 4 small subunits are PetG, PetL, PetM and PetN. The complex functions as a dimer.

The protein localises to the cellular thylakoid membrane. In terms of biological role, component of the cytochrome b6-f complex, which mediates electron transfer between photosystem II (PSII) and photosystem I (PSI), cyclic electron flow around PSI, and state transitions. This Prochlorococcus marinus (strain MIT 9313) protein is Cytochrome b6-f complex subunit 4.